The following is a 92-amino-acid chain: Small ribosomal subunit protein uS19c (92 aa).

The protein belongs to the universal ribosomal protein uS19 family.

It localises to the plastid. The protein localises to the chloroplast. Protein S19 forms a complex with S13 that binds strongly to the 16S ribosomal RNA. The protein is Small ribosomal subunit protein uS19c of Chara vulgaris (Common stonewort).